Here is an 81-residue protein sequence, read N- to C-terminus: Antimicrobial peptide D2 (81 aa).

The N-terminal stretch at 1-31 (MAKTVLGIHVTFLTLLFAVILLNDVMYTPVE) is a signal peptide. 4 cysteine pairs are disulfide-bonded: Cys-34–Cys-81, Cys-45–Cys-66, Cys-51–Cys-75, and Cys-55–Cys-77.

Its function is as follows. Antimicrobial peptide probably active against fungi like B.sorokiniana, F.oxysporum, F.graminearum, F.avenaceum, B.cinerea, P.beta, P.infestans and P.debaryanum. This chain is Antimicrobial peptide D2, found in Stellaria media (Common chickweed).